A 431-amino-acid polypeptide reads, in one-letter code: Glutamate-1-semialdehyde 2,1-aminomutase (431 aa).

An N6-(pyridoxal phosphate)lysine modification is found at lysine 265.

This sequence belongs to the class-III pyridoxal-phosphate-dependent aminotransferase family. HemL subfamily. In terms of assembly, homodimer. Pyridoxal 5'-phosphate is required as a cofactor.

It localises to the cytoplasm. The catalysed reaction is (S)-4-amino-5-oxopentanoate = 5-aminolevulinate. It participates in porphyrin-containing compound metabolism; protoporphyrin-IX biosynthesis; 5-aminolevulinate from L-glutamyl-tRNA(Glu): step 2/2. This chain is Glutamate-1-semialdehyde 2,1-aminomutase, found in Aliivibrio fischeri (strain MJ11) (Vibrio fischeri).